Consider the following 482-residue polypeptide: MFS-type transporter cnsL (482 aa).

The chain crosses the membrane as a helical span at residues 73 to 93 (LFVCATLSGLDKTAISAAAVY). Asn-100 carries an N-linked (GlcNAc...) asparagine glycan. Helical transmembrane passes span 108-128 (WIGS…AYCL), 131-151 (VPAV…EMSV), 170-190 (IILN…VGYY), 199-219 (IIFL…YFVL), 304-324 (LLAM…SYLA), 333-353 (AIVT…YALP), 361-381 (LVGL…VSVY), 392-412 (ITLY…GPQT), and 426-446 (VAMI…GVVC).

The protein belongs to the major facilitator superfamily. Allantoate permease family.

The protein resides in the cell membrane. MFS-type transporter; part of the gene cluster that mediates the biosynthesis of communesins, a prominent class of indole alkaloids with great potential as pharmaceuticals. With the MFS transporter cnsO, is most likely responsible for cummunesins secretion and thereby may contribute to intrinsic resistance. This chain is MFS-type transporter cnsL, found in Penicillium expansum (Blue mold rot fungus).